The chain runs to 156 residues: MDIRKVKKLIELLEESGIDELEIREGEESVRISRHSKTAAQPVYAQAPAFAAPVAAPAPAAAAPAAAAAESAPAAPKLNGNVVRSPMVGTFYRAASPTSANFVEVGQSVKKGDILCIVEAMKMMNHIEAEVSGTIESILVENGQPVEFDQPLFTIV.

Residues glycine 80–valine 156 enclose the Biotinyl-binding domain. Lysine 122 is subject to N6-biotinyllysine.

Homodimer.

The protein operates within lipid metabolism; fatty acid biosynthesis. Its function is as follows. This protein is a component of the acetyl coenzyme A carboxylase complex; first, biotin carboxylase catalyzes the carboxylation of the carrier protein and then the transcarboxylase transfers the carboxyl group to form malonyl-CoA. The polypeptide is Biotin carboxyl carrier protein of acetyl-CoA carboxylase (accB) (Pseudomonas aeruginosa (strain ATCC 15692 / DSM 22644 / CIP 104116 / JCM 14847 / LMG 12228 / 1C / PRS 101 / PAO1)).